A 183-amino-acid chain; its full sequence is Calcineurin subunit B type 2 (183 aa).

The N-myristoyl glycine moiety is linked to residue Gly-2. 4 EF-hand domains span residues 25-60, 64-92, 94-129, and 135-170; these read REIK…SMNP, RIIS…FHPK, DKAD…MVGS, and QISS…SGCN. Ca(2+) contacts are provided by Asp-107, Asn-109, Asp-111, and Glu-118.

The protein belongs to the calcineurin regulatory subunit family. As to quaternary structure, calcineurin is composed of a catalytic subunit (A) and a regulatory subunit (B).

Its function is as follows. Regulatory subunit of calcineurin, a calcium-dependent, calmodulin stimulated protein phosphatase. Confers calcium sensitivity. This chain is Calcineurin subunit B type 2 (cnbB), found in Dictyostelium discoideum (Social amoeba).